The chain runs to 152 residues: Peptide deformylase (152 aa).

Positions 88 and 130 each coordinate Fe cation. Glu131 is an active-site residue. Fe cation is bound at residue His134.

This sequence belongs to the polypeptide deformylase family. It depends on Fe(2+) as a cofactor.

The catalysed reaction is N-terminal N-formyl-L-methionyl-[peptide] + H2O = N-terminal L-methionyl-[peptide] + formate. Its function is as follows. Removes the formyl group from the N-terminal Met of newly synthesized proteins. Requires at least a dipeptide for an efficient rate of reaction. N-terminal L-methionine is a prerequisite for activity but the enzyme has broad specificity at other positions. In Carboxydothermus hydrogenoformans (strain ATCC BAA-161 / DSM 6008 / Z-2901), this protein is Peptide deformylase.